The sequence spans 394 residues: Phosphoglycerate kinase (394 aa).

Residues 21-23 (DFN), Arg-36, 59-62 (HLGR), Arg-118, and Arg-151 each bind substrate. Phosphoserine is present on Ser-183. ATP-binding residues include Lys-201 and Gly-292. Phosphothreonine is present on Thr-299. Residues Glu-323 and 350–353 (GGDS) contribute to the ATP site.

It belongs to the phosphoglycerate kinase family. Monomer.

It localises to the cytoplasm. The catalysed reaction is (2R)-3-phosphoglycerate + ATP = (2R)-3-phospho-glyceroyl phosphate + ADP. It functions in the pathway carbohydrate degradation; glycolysis; pyruvate from D-glyceraldehyde 3-phosphate: step 2/5. This is Phosphoglycerate kinase from Bacillus cereus (strain ZK / E33L).